Consider the following 273-residue polypeptide: 3-methyl-2-oxobutanoate hydroxymethyltransferase (273 aa).

Asp-53 and Asp-92 together coordinate Mg(2+). 3-methyl-2-oxobutanoate contacts are provided by residues 53–54, Asp-92, and Lys-120; that span reads DS. Mg(2+) is bound at residue Glu-122. The Proton acceptor role is filled by Glu-189.

The protein belongs to the PanB family. Homodecamer; pentamer of dimers. It depends on Mg(2+) as a cofactor.

The protein localises to the cytoplasm. It catalyses the reaction 3-methyl-2-oxobutanoate + (6R)-5,10-methylene-5,6,7,8-tetrahydrofolate + H2O = 2-dehydropantoate + (6S)-5,6,7,8-tetrahydrofolate. It functions in the pathway cofactor biosynthesis; (R)-pantothenate biosynthesis; (R)-pantoate from 3-methyl-2-oxobutanoate: step 1/2. Catalyzes the reversible reaction in which hydroxymethyl group from 5,10-methylenetetrahydrofolate is transferred onto alpha-ketoisovalerate to form ketopantoate. This chain is 3-methyl-2-oxobutanoate hydroxymethyltransferase, found in Cupriavidus taiwanensis (strain DSM 17343 / BCRC 17206 / CCUG 44338 / CIP 107171 / LMG 19424 / R1) (Ralstonia taiwanensis (strain LMG 19424)).